A 91-amino-acid polypeptide reads, in one-letter code: ATP synthase subunit c (91 aa).

2 consecutive transmembrane segments (helical) span residues 4 to 24 (LTMC…GTGI) and 53 to 73 (IGLA…LIIL).

The protein belongs to the ATPase C chain family. F-type ATPases have 2 components, F(1) - the catalytic core - and F(0) - the membrane proton channel. F(1) has five subunits: alpha(3), beta(3), gamma(1), delta(1), epsilon(1). F(0) has three main subunits: a(1), b(2) and c(10-14). The alpha and beta chains form an alternating ring which encloses part of the gamma chain. F(1) is attached to F(0) by a central stalk formed by the gamma and epsilon chains, while a peripheral stalk is formed by the delta and b chains.

Its subcellular location is the cell inner membrane. Its function is as follows. F(1)F(0) ATP synthase produces ATP from ADP in the presence of a proton or sodium gradient. F-type ATPases consist of two structural domains, F(1) containing the extramembraneous catalytic core and F(0) containing the membrane proton channel, linked together by a central stalk and a peripheral stalk. During catalysis, ATP synthesis in the catalytic domain of F(1) is coupled via a rotary mechanism of the central stalk subunits to proton translocation. In terms of biological role, key component of the F(0) channel; it plays a direct role in translocation across the membrane. A homomeric c-ring of between 10-14 subunits forms the central stalk rotor element with the F(1) delta and epsilon subunits. This is ATP synthase subunit c from Geobacter metallireducens (strain ATCC 53774 / DSM 7210 / GS-15).